Reading from the N-terminus, the 2629-residue chain is Protein DOP1 homolog (2629 aa).

Disordered regions lie at residues 561 to 584 (NKGVPGTHTQGSSLEKSKSDSRLN), 605 to 652 (SASN…TPRS), 688 to 710 (AGNVHDAEEPKSAPPDPQSPQFY), 1278 to 1340 (MDES…SSSA), 1371 to 1395 (TYRLTREKTPGENSLNSVATDQTEH), 1435 to 1471 (ISKTSTDSNLSNSCSQAEPAPEGDPQGEEEATAATDS), and 1766 to 1785 (RQDTPPAAGDDSTGNTSPTR). Composition is skewed to polar residues over residues 605–615 (SASNQSVGRQS) and 636–647 (ASDTGQQSSSDL). The segment covering 1307–1320 (DITDNSDSSDFESD) has biased composition (acidic residues). Over residues 1321-1333 (SELRETSLEKEDS) the composition is skewed to basic and acidic residues. Composition is skewed to polar residues over residues 1381 to 1391 (GENSLNSVATD) and 1435 to 1450 (ISKTSTDSNLSNSCSQ).

The protein belongs to the DOP1 family.

Its subcellular location is the golgi apparatus membrane. Its function is as follows. May be involved in protein traffic between late Golgi and early endosomes. This chain is Protein DOP1 homolog, found in Drosophila pseudoobscura pseudoobscura (Fruit fly).